Reading from the N-terminus, the 140-residue chain is MAKQIKGVLGKKLGMTQVFDADNRMVPVTVVEAGPCVVTRVRTPEKDGYSAVQLGFGQIDPRKVNKPLGDYLRKHEITPRRYFTEIRTDDASEYTIGQEVLADTFEAGQFVDVTGKSKGKGFAGVMKRHGFGGLGASHGT.

This sequence belongs to the universal ribosomal protein uL3 family. Part of the 50S ribosomal subunit. Forms a cluster with proteins L14 and L19.

In terms of biological role, one of the primary rRNA binding proteins, it binds directly near the 3'-end of the 23S rRNA, where it nucleates assembly of the 50S subunit. The chain is Large ribosomal subunit protein uL3 (rplC) from Planobispora rosea.